The sequence spans 68 residues: Large ribosomal subunit protein bL31 (68 aa).

4 residues coordinate Zn(2+): cysteine 17, cysteine 19, cysteine 37, and cysteine 40.

It belongs to the bacterial ribosomal protein bL31 family. Type A subfamily. As to quaternary structure, part of the 50S ribosomal subunit. It depends on Zn(2+) as a cofactor.

Binds the 23S rRNA. This is Large ribosomal subunit protein bL31 from Dehalococcoides mccartyi (strain ATCC BAA-2266 / KCTC 15142 / 195) (Dehalococcoides ethenogenes (strain 195)).